The following is a 768-amino-acid chain: UPF0313 protein VV1_2212 (768 aa).

Positions 363–640 (AYDMIKTSVN…LHKALLRYHD (278 aa)) constitute a Radical SAM core domain. [4Fe-4S] cluster is bound by residues Cys-377, Cys-381, and Cys-384. Residues 674–768 (DARTPAQRRK…GGRNQPSRAR (95 aa)) form a disordered region. A compositionally biased stretch (basic residues) spans 679–689 (AQRRKSGRHGA). Polar residues predominate over residues 719-731 (GGQSNSAPSRSGS).

This sequence belongs to the UPF0313 family. [4Fe-4S] cluster serves as cofactor.

In Vibrio vulnificus (strain CMCP6), this protein is UPF0313 protein VV1_2212.